A 467-amino-acid polypeptide reads, in one-letter code: tRNA modification GTPase MnmE (467 aa).

Positions 25, 87, and 130 each coordinate (6S)-5-formyl-5,6,7,8-tetrahydrofolate. The TrmE-type G domain maps to 226–389 (GLSVVLAGQP…LRGELLRIAG (164 aa)). Residue Asn-236 coordinates K(+). Residues 236–241 (NVGKSS), 255–261 (TPIAGTT), and 280–283 (DTAG) each bind GTP. Residue Ser-240 participates in Mg(2+) binding. Residues Thr-255, Ile-257, and Thr-260 each contribute to the K(+) site. A Mg(2+)-binding site is contributed by Thr-261. Residue Lys-467 participates in (6S)-5-formyl-5,6,7,8-tetrahydrofolate binding.

This sequence belongs to the TRAFAC class TrmE-Era-EngA-EngB-Septin-like GTPase superfamily. TrmE GTPase family. In terms of assembly, homodimer. Heterotetramer of two MnmE and two MnmG subunits. It depends on K(+) as a cofactor.

It localises to the cytoplasm. Its function is as follows. Exhibits a very high intrinsic GTPase hydrolysis rate. Involved in the addition of a carboxymethylaminomethyl (cmnm) group at the wobble position (U34) of certain tRNAs, forming tRNA-cmnm(5)s(2)U34. The protein is tRNA modification GTPase MnmE of Burkholderia mallei (strain NCTC 10247).